The sequence spans 248 residues: Triosephosphate isomerase (248 aa).

9-11 (NWK) lines the substrate pocket. Residue His94 is the Electrophile of the active site. Glu166 acts as the Proton acceptor in catalysis. Residues Gly172, Ser212, and 233–234 (GG) each bind substrate.

Belongs to the triosephosphate isomerase family. In terms of assembly, homodimer.

It is found in the cytoplasm. It catalyses the reaction D-glyceraldehyde 3-phosphate = dihydroxyacetone phosphate. Its pathway is carbohydrate biosynthesis; gluconeogenesis. It functions in the pathway carbohydrate degradation; glycolysis; D-glyceraldehyde 3-phosphate from glycerone phosphate: step 1/1. In terms of biological role, involved in the gluconeogenesis. Catalyzes stereospecifically the conversion of dihydroxyacetone phosphate (DHAP) to D-glyceraldehyde-3-phosphate (G3P). The chain is Triosephosphate isomerase from Clostridium botulinum (strain Langeland / NCTC 10281 / Type F).